The following is a 291-amino-acid chain: Lipoyl synthase (291 aa).

[4Fe-4S] cluster-binding residues include C35, C40, C46, C61, C65, C68, and S273. The Radical SAM core domain maps to F47–E262.

Belongs to the radical SAM superfamily. Lipoyl synthase family. It depends on [4Fe-4S] cluster as a cofactor.

It is found in the cytoplasm. The catalysed reaction is [[Fe-S] cluster scaffold protein carrying a second [4Fe-4S](2+) cluster] + N(6)-octanoyl-L-lysyl-[protein] + 2 oxidized [2Fe-2S]-[ferredoxin] + 2 S-adenosyl-L-methionine + 4 H(+) = [[Fe-S] cluster scaffold protein] + N(6)-[(R)-dihydrolipoyl]-L-lysyl-[protein] + 4 Fe(3+) + 2 hydrogen sulfide + 2 5'-deoxyadenosine + 2 L-methionine + 2 reduced [2Fe-2S]-[ferredoxin]. Its pathway is protein modification; protein lipoylation via endogenous pathway; protein N(6)-(lipoyl)lysine from octanoyl-[acyl-carrier-protein]: step 2/2. In terms of biological role, catalyzes the radical-mediated insertion of two sulfur atoms into the C-6 and C-8 positions of the octanoyl moiety bound to the lipoyl domains of lipoate-dependent enzymes, thereby converting the octanoylated domains into lipoylated derivatives. The chain is Lipoyl synthase from Citrifermentans bemidjiense (strain ATCC BAA-1014 / DSM 16622 / JCM 12645 / Bem) (Geobacter bemidjiensis).